Reading from the N-terminus, the 180-residue chain is Probable chorismate pyruvate-lyase (180 aa).

The substrate site is built by arginine 76, leucine 113, and glutamate 171.

This sequence belongs to the UbiC family.

It localises to the cytoplasm. It catalyses the reaction chorismate = 4-hydroxybenzoate + pyruvate. It functions in the pathway cofactor biosynthesis; ubiquinone biosynthesis. In terms of biological role, removes the pyruvyl group from chorismate, with concomitant aromatization of the ring, to provide 4-hydroxybenzoate (4HB) for the ubiquinone pathway. The protein is Probable chorismate pyruvate-lyase of Pseudoalteromonas translucida (strain TAC 125).